The following is a 375-amino-acid chain: Tyrosine--tRNA ligase (375 aa).

Positions 37, 168, 172, 175, and 190 each coordinate L-tyrosine. The 'KMSKS' region motif lies at 251 to 255; the sequence is KMSKS. ATP is bound at residue K254.

The protein belongs to the class-I aminoacyl-tRNA synthetase family. TyrS type 4 subfamily. Homodimer.

The protein localises to the cytoplasm. The enzyme catalyses tRNA(Tyr) + L-tyrosine + ATP = L-tyrosyl-tRNA(Tyr) + AMP + diphosphate + H(+). In terms of biological role, catalyzes the attachment of tyrosine to tRNA(Tyr) in a two-step reaction: tyrosine is first activated by ATP to form Tyr-AMP and then transferred to the acceptor end of tRNA(Tyr). In Pyrococcus abyssi (strain GE5 / Orsay), this protein is Tyrosine--tRNA ligase.